The following is a 160-amino-acid chain: Cytochrome b6-f complex subunit 4 (160 aa).

The next 3 membrane-spanning stretches (helical) occupy residues Leu36–Val56, Leu95–Glu115, and Val131–Ile151.

It belongs to the cytochrome b family. PetD subfamily. As to quaternary structure, the 4 large subunits of the cytochrome b6-f complex are cytochrome b6, subunit IV (17 kDa polypeptide, PetD), cytochrome f and the Rieske protein, while the 4 small subunits are PetG, PetL, PetM and PetN. The complex functions as a dimer.

It localises to the cellular thylakoid membrane. Functionally, component of the cytochrome b6-f complex, which mediates electron transfer between photosystem II (PSII) and photosystem I (PSI), cyclic electron flow around PSI, and state transitions. This is Cytochrome b6-f complex subunit 4 from Prochlorococcus marinus (strain MIT 9515).